The sequence spans 622 residues: Prolactin receptor (622 aa).

Positions 1–24 (MKENVASATVFTLLLFLNTCLLNG) are cleaved as a signal peptide. The Extracellular segment spans residues 25–234 (QLPPGKPEIF…QIPSDFTMND (210 aa)). 2 Fibronectin type-III domains span residues 27 to 128 (PPGK…VQPD) and 129 to 229 (PPLE…IPSD). A disulfide bridge links C36 with C46. N59 carries N-linked (GlcNAc...) asparagine glycosylation. The cysteines at positions 75 and 86 are disulfide-linked. N-linked (GlcNAc...) asparagine glycosylation is present at N104. D211 and H212 together coordinate Zn(2+). The short motif at 215–219 (WSAWS) is the WSXWS motif element. N-linked (GlcNAc...) asparagine glycosylation occurs at N233. The chain crosses the membrane as a helical span at residues 235 to 258 (TTVWISVAVLSAVICLIIVWAVAL). The Cytoplasmic portion of the chain corresponds to 259–622 (KGYSMVTCIF…DPACFTHSFH (364 aa)). The Box 1 motif signature appears at 267–275 (IFPPVPGPK). 3 disordered regions span residues 326–378 (MSVH…YDPE), 461–505 (SSQT…GSAK), and 520–545 (ALSLLPKQRENSGKPKKPGTPENNKE). Residues 466 to 486 (KSREEGKATQQREVESFHSET) are compositionally biased toward basic and acidic residues.

Belongs to the type I cytokine receptor family. Type 1 subfamily. In terms of assembly, homodimer upon hormone binding. Interacts with SMARCA1. Interacts with GH1. Interacts with CSH. Interacts with NEK3 and VAV2 and this interaction is prolactin-dependent. Expressed in breast, placenta, kidney, liver and pancreas.

Its subcellular location is the membrane. The protein resides in the secreted. Functionally, this is a receptor for the anterior pituitary hormone prolactin (PRL). Acts as a prosurvival factor for spermatozoa by inhibiting sperm capacitation through suppression of SRC kinase activation and stimulation of AKT. Isoform 4 is unable to transduce prolactin signaling. Isoform 6 is unable to transduce prolactin signaling. The sequence is that of Prolactin receptor (PRLR) from Homo sapiens (Human).